Reading from the N-terminus, the 1382-residue chain is MKSPAVLAPGILVFLFTFVQKSDGECKEALVKSRMNVNMQYQLPNFTAETSIQNVVLHKHHIYLGAVNYIYVLNDKDLQKVAEYKTGPVLEHPDCFPCQDCSHKANLSGGVWKDNINMALLVDTYYDDQLISCGSVHRGTCQRHVLPPNNTADIESEVHCMYSPQADEETSQCPDCVVSALGTKVLLSEKERFINFFVGNTINSSYLPDHSLHSISVRRLKETQDGFKFLTDQSYIDVLPELQDSYPIKYVHAFESNHFIYFLTVQRETLDAQTFHTRIIRFCSTDSGLHSYMEMPLECILTEKRRKRSTKQEVFNILQAAYVSKPGAQLARQIGANLNDDILYGVFAQSKPDSSEPMNRSAVCAFPVKYVNEFFNKIVNKNNVRCLQHFYGPNHEHCFNRTLLRNSSGCEVRSDEYRTEFTTALPRVDLFTGQFNQVLLTSISTFIKGDLTIANLGTSEGRFMQVVVSRSGSLTPHVNFRLDSHPVSPEVIVEHPPNQNGYTLVVTGKKITKIPLNGLGCEHFQSCSQCLSAPSFVQCGWCRDKCVRLEECPSGTWTQETCLPAIYKVFPTSAPLEGGTTLTVCGWDFGFKRNNKFDLKKTRVLIGNESCTLTLSESTTNMLKCTVGPAMNEHFNMSIVISNSRGSVQYSTFSYVDPIITSISPNYGPKTGGTLLTLTGKHLNSGNSRHISIGGKTCTLKSVSHSILECYTPAQSTPSEFSIKLKIDLANREVNSFIYREDPIVYEIHPTKSFVSGGSTITGVGKNLNSVSILRMVINVHEAGRNFTVACQHRSNSEIICCTTPSLQQLNLQLPLKTKAFFMLDGIHSKYFDLIYVHNPVFKPFEKPVMISIGNENVLEIKGNDIDPEAVKGEVLKVGNKSCENIHSHSEAVLCTVPNDLLKLNSELNIEWKQAISSTVLGKVIVQPDQNFTGLIVGVVSISIILLLLLGLFLWLKKRKQIKDLGSELVRYDARVHTPHLDRLVSARSVSPTTEMVSNESVDYRATFPEDQFPNASQNGSCRQVQYPLTDLSPILTSGDSDVSSPLLQNTVHIDLSALNPELVQAVQHVVIGPSSLIVHFNEVIGRGHFGCVYHGTLLDNDDKKIHCAVKSLNRITDIGEVSQFLTEGIIMKDFSHPNVLSLLGICLRSEGSPLVVLPYMKHGDLRNFIRNETHNPTVKDLIGFGLQVAKGMEYLASKKFVHRDLAARNCMLDEKFTVKVADFGLARDVYDKEYYSVHNKTGAKLPVKWMALESLQTQKFTTKSDVWSFGVLLWELMTRGAPPYPDVNTFDITVYLLQGRRLLQPEYCPDALYEVMLKCWHPKAELRPSFSELVSRISAIFSTFIGEHYVHVNATYVNVKCVAPYPSLLSSQDNVNGEGDT.

The signal sequence occupies residues 1-24 (MKSPAVLAPGILVFLFTFVQKSDG). Topologically, residues 25–933 (ECKEALVKSR…VIVQPDQNFT (909 aa)) are extracellular. The 490-residue stretch at 27-516 (KEALVKSRMN…TGKKITKIPL (490 aa)) folds into the Sema domain. Asn45 is a glycosylation site (N-linked (GlcNAc...) asparagine). Disulfide bonds link Cys95-Cys101, Cys98-Cys160, Cys133-Cys141, and Cys173-Cys176. Asn106 is a glycosylation site (N-linked (GlcNAc...) asparagine). Asn149 carries an N-linked (GlcNAc...) asparagine glycan. Residues Asn203 and Asn359 are each glycosylated (N-linked (GlcNAc...) asparagine). 2 disulfide bridges follow: Cys299–Cys364 and Cys386–Cys398. 2 N-linked (GlcNAc...) asparagine glycosylation sites follow: Asn400 and Asn406. Disulfide bonds link Cys521–Cys539, Cys527–Cys562, Cys530–Cys546, and Cys542–Cys552. 3 IPT/TIG domains span residues 564-656 (PAIY…FSYV), 658-740 (PIIT…FIYR), and 743-837 (PIVY…LIYV). Thr583 carries O-linked (Man) threonine glycosylation. N-linked (GlcNAc...) asparagine glycosylation is found at Asn608 and Asn636. O-linked (Man) threonine glycosylation is found at Thr677 and Thr762. 3 N-linked (GlcNAc...) asparagine glycosylation sites follow: Asn786, Asn880, and Asn931. Residues 934–956 (GLIVGVVSISIILLLLLGLFLWL) traverse the membrane as a helical segment. The Cytoplasmic portion of the chain corresponds to 957–1382 (KKRKQIKDLG…QDNVNGEGDT (426 aa)). At Ser967 the chain carries Phosphoserine. At Thr978 the chain carries Phosphothreonine. A phosphoserine mark is found at Ser991, Ser998, and Ser1001. Tyr1004 is subject to Phosphotyrosine. The Protein kinase domain maps to 1079–1346 (VHFNEVIGRG…RISAIFSTFI (268 aa)). ATP contacts are provided by residues 1085 to 1093 (IGRGHFGCV) and Lys1111. The active-site Proton acceptor is Asp1205. Residues 1213-1382 (LDEKFTVKVA…QDNVNGEGDT (170 aa)) are interaction with RANBP9. Tyr1231 carries the post-translational modification Phosphotyrosine. Residues Tyr1235 and Tyr1236 each carry the phosphotyrosine; by autocatalysis modification. Thr1290 bears the Phosphothreonine mark. Residues 1321–1360 (WHPKAELRPSFSELVSRISAIFSTFIGEHYVHVNATYVNV) are interaction with MUC20. Residues Tyr1350 and Tyr1357 each carry the phosphotyrosine; by autocatalysis modification. Phosphotyrosine is present on Tyr1366.

Belongs to the protein kinase superfamily. Tyr protein kinase family. Heterodimer made of an alpha chain (50 kDa) and a beta chain (145 kDa) which are disulfide linked. Binds PLXNB1. Interacts when phosphorylated with downstream effectors including STAT3, PIK3R1, SRC, PCLG1, GRB2 and GAB1. Interacts with SPSB1, SPSB2 and SPSB4. Interacts with INPP5D/SHIP1. When phosphorylated at Tyr-1357, interacts with INPPL1/SHIP2. Interacts with RANBP9 and RANBP10, as well as SPSB1, SPSB2, SPSB3 and SPSB4. SPSB1 binding occurs in the presence and in the absence of HGF, however HGF treatment has a positive effect on this interaction. Interacts with MUC20; prevents interaction with GRB2 and suppresses hepatocyte growth factor-induced cell proliferation. Interacts with GRB10. Interacts with PTPN1 and PTPN2. Interacts with HSP90AA1 and HSP90AB1; the interaction suppresses MET kinase activity. Interacts with tensin TNS3. Interacts (when phosphorylated) with tensin TNS4 (via SH2 domain); the interaction increases MET protein stability by inhibiting MET endocytosis and subsequent lysosomal degradation. Autophosphorylated in response to ligand binding on Tyr-1235 and Tyr-1236 in the kinase domain leading to further phosphorylation of Tyr-1350 and Tyr-1357 in the C-terminal multifunctional docking site. Dephosphorylated by PTPRJ at Tyr-1350 and Tyr-1366. Dephosphorylated by PTPN1 and PTPN2. In terms of processing, ubiquitinated. Ubiquitination by CBL regulates the receptor stability and activity through proteasomal degradation. Post-translationally, O-mannosylation of IPT/TIG domains by TMEM260 is required for protein maturation. O-mannosylated residues are composed of single mannose glycans that are not elongated or modified.

Its subcellular location is the membrane. It carries out the reaction L-tyrosyl-[protein] + ATP = O-phospho-L-tyrosyl-[protein] + ADP + H(+). Its activity is regulated as follows. In its inactive state, the C-terminal tail interacts with the catalytic domain and inhibits the kinase activity. Upon ligand binding, the C-terminal tail is displaced and becomes phosphorylated, thus increasing the kinase activity. In terms of biological role, receptor tyrosine kinase that transduces signals from the extracellular matrix into the cytoplasm by binding to hepatocyte growth factor/HGF ligand. Regulates many physiological processes including proliferation, scattering, morphogenesis and survival. Ligand binding at the cell surface induces autophosphorylation of MET on its intracellular domain that provides docking sites for downstream signaling molecules. Following activation by ligand, interacts with the PI3-kinase subunit PIK3R1, PLCG1, SRC, GRB2, STAT3 or the adapter GAB1. Recruitment of these downstream effectors by MET leads to the activation of several signaling cascades including the RAS-ERK, PI3 kinase-AKT, or PLCgamma-PKC. The RAS-ERK activation is associated with the morphogenetic effects while PI3K/AKT coordinates prosurvival effects. During embryonic development, MET signaling plays a role in gastrulation, development and migration of muscles and neuronal precursors, angiogenesis and kidney formation. In adults, participates in wound healing as well as organ regeneration and tissue remodeling. Also promotes differentiation and proliferation of hematopoietic cells. The chain is Hepatocyte growth factor receptor (MET) from Muntiacus muntjak (Barking deer).